The sequence spans 1201 residues: Stress response protein nst1 (1201 aa).

7 disordered regions span residues 1–178 (MSDP…PHTL), 268–341 (NQGS…YEDE), 429–478 (QSLH…GDAV), 535–707 (EEQT…PASL), 724–848 (IATP…PLMN), 899–952 (QPSG…QRDV), and 1150–1169 (EPDT…PGEI). Positions 40-50 (NRKKQKRRQKQ) are enriched in basic residues. Residues 84–114 (VSDDHDLDERANGETYYEEIHDATHDLDDHP) are compositionally biased toward basic and acidic residues. Over residues 116-128 (NLSNGQPGQQNAT) the composition is skewed to polar residues. The span at 130 to 141 (RKSKKKKGKKNR) shows a compositional bias: basic residues. 2 stretches are compositionally biased toward polar residues: residues 145–164 (QTMG…SMSQ) and 293–302 (GQHTRTQGQF). Composition is skewed to acidic residues over residues 313–341 (PEDD…YEDE) and 441–466 (DDDD…EDEM). Residues 520 to 673 (KVAEQRQQKL…KTKDERERKL (154 aa)) are a coiled coil. 2 stretches are compositionally biased toward basic and acidic residues: residues 535 to 553 (EEQT…EAQK) and 563 to 692 (QAKE…DPQA). The span at 740-767 (QPSQQGSHTSSPRSQPASTEPSQVSISP) shows a compositional bias: polar residues. Low complexity-rich tracts occupy residues 769–805 (SMAP…LSPL) and 926–938 (PISR…RPSS).

It belongs to the NST1 family.

The protein localises to the cytoplasm. Functionally, may act as a negative regulator of salt tolerance. This chain is Stress response protein nst1 (nst1), found in Aspergillus niger (strain ATCC MYA-4892 / CBS 513.88 / FGSC A1513).